The chain runs to 306 residues: Putative S-adenosyl-L-methionine-dependent methyltransferase FRAAL5401 (306 aa).

Residues Asp126 and 155-156 (DL) contribute to the S-adenosyl-L-methionine site. The interval 201 to 225 (LSAPESRVATENRPNPKPGDEDRTK) is disordered.

It belongs to the UPF0677 family.

Its function is as follows. Exhibits S-adenosyl-L-methionine-dependent methyltransferase activity. The polypeptide is Putative S-adenosyl-L-methionine-dependent methyltransferase FRAAL5401 (Frankia alni (strain DSM 45986 / CECT 9034 / ACN14a)).